Here is a 421-residue protein sequence, read N- to C-terminus: UDP-N-acetylglucosamine 1-carboxyvinyltransferase 1 (421 aa).

22–23 (KN) is a binding site for phosphoenolpyruvate. R95 contacts UDP-N-acetyl-alpha-D-glucosamine. C119 (proton donor) is an active-site residue. C119 is modified (2-(S-cysteinyl)pyruvic acid O-phosphothioketal). UDP-N-acetyl-alpha-D-glucosamine contacts are provided by residues 124 to 128 (RPIEQ), D308, and V330.

Belongs to the EPSP synthase family. MurA subfamily.

It localises to the cytoplasm. The enzyme catalyses phosphoenolpyruvate + UDP-N-acetyl-alpha-D-glucosamine = UDP-N-acetyl-3-O-(1-carboxyvinyl)-alpha-D-glucosamine + phosphate. Its pathway is cell wall biogenesis; peptidoglycan biosynthesis. Cell wall formation. Adds enolpyruvyl to UDP-N-acetylglucosamine. The chain is UDP-N-acetylglucosamine 1-carboxyvinyltransferase 1 from Staphylococcus aureus (strain MW2).